The following is a 519-amino-acid chain: Sorting nexin-2 (519 aa).

Disordered stretches follow at residues 1–20 (MAAE…DFEE) and 30–103 (STVS…VTPV). Composition is skewed to low complexity over residues 30–44 (STVS…SPDP) and 93–103 (SSETSPAVTPV). Residue serine 97 is modified to Phosphoserine. A phosphothreonine mark is found at threonine 101 and threonine 104. Phosphoserine occurs at positions 117 and 119. Residues 140-269 (FDIEIGVSDP…QFLESSELPR (130 aa)) form the PX domain. Residues arginine 183, serine 185, lysine 211, and arginine 235 each contribute to the a 1,2-diacyl-sn-glycero-3-phospho-(1D-myo-inositol-3-phosphate) site. Serine 185 carries the post-translational modification Phosphoserine. Positions 260-519 (QFLESSELPR…AFLPEAKAIA (260 aa)) are interaction with RhoG. Serine 277 is modified (phosphoserine). A membrane-binding amphipathic helix region spans residues 278–295 (GAGILRMVNKAADAVNKM). In terms of domain architecture, BAR spans 299–519 (MNESDAWFEE…AFLPEAKAIA (221 aa)). Lysine 469 carries the post-translational modification N6-acetyllysine.

Belongs to the sorting nexin family. As to quaternary structure, predominantly forms heterodimers with BAR domain-containing sorting nexins SNX5, SNX6 and SNX32; can self-associate to form homodimers. The heterodimers are proposed to self-assemble into helical arrays on the membrane to stabilize and expand local membrane curvature underlying endosomal tubule formation. Thought to be a component of the originally described retromer complex (also called SNX-BAR retromer) which is a pentamer containing the heterotrimeric retromer cargo-selective complex (CSC), also decribed as vacuolar protein sorting subcomplex (VPS) and a heterodimeric membrane-deforming subcomplex formed between SNX1 or SNX2 and SNX5 or SNX6 (also called SNX-BAR subcomplex); the respective CSC and SNX-BAR subcomplexes associate with low affinity. Interacts with SNX5, SNX6, SNX32, VPS26A, VPS29, VPS35, FNBP1, KALRN, RHOG (GDP-bound form).

It is found in the early endosome membrane. Its subcellular location is the cell projection. It localises to the lamellipodium. Functionally, involved in several stages of intracellular trafficking. Interacts with membranes containing phosphatidylinositol 3-phosphate (PtdIns(3P)) or phosphatidylinositol 3,5-bisphosphate (PtdIns(3,5)P2). Acts in part as component of the retromer membrane-deforming SNX-BAR subcomplex. The SNX-BAR retromer mediates retrograde transport of cargo proteins from endosomes to the trans-Golgi network (TGN) and is involved in endosome-to-plasma membrane transport for cargo protein recycling. The SNX-BAR subcomplex functions to deform the donor membrane into a tubular profile called endosome-to-TGN transport carrier (ETC). Can sense membrane curvature and has in vitro vesicle-to-membrane remodeling activity. Required for retrograde endosome-to-TGN transport of TGN38. Promotes KALRN- and RHOG-dependent but retromer-independent membrane remodeling such as lamellipodium formation; the function is dependent on GEF activity of KALRN. The sequence is that of Sorting nexin-2 (SNX2) from Bos taurus (Bovine).